The chain runs to 268 residues: UPF0719 transmembrane protein aq_1349 (268 aa).

8 helical membrane passes run 5–24 (LIAL…LFFR), 37–59 (NLAL…YSVY), 69–91 (LYLI…IFLR), 104–126 (AGAG…ASFW), 130–152 (SFIL…LFIS), 173–195 (FSAS…GAIS), 210–232 (VLYF…FLLF), and 245–267 (NLSA…LAVM).

This sequence belongs to the UPF0719 family.

The protein localises to the cell membrane. This Aquifex aeolicus (strain VF5) protein is UPF0719 transmembrane protein aq_1349.